We begin with the raw amino-acid sequence, 274 residues long: Bis(5'-nucleosyl)-tetraphosphatase, symmetrical (274 aa).

It belongs to the Ap4A hydrolase family.

It catalyses the reaction P(1),P(4)-bis(5'-adenosyl) tetraphosphate + H2O = 2 ADP + 2 H(+). In terms of biological role, hydrolyzes diadenosine 5',5'''-P1,P4-tetraphosphate to yield ADP. This Erwinia tasmaniensis (strain DSM 17950 / CFBP 7177 / CIP 109463 / NCPPB 4357 / Et1/99) protein is Bis(5'-nucleosyl)-tetraphosphatase, symmetrical.